A 163-amino-acid chain; its full sequence is Xanthine-guanine phosphoribosyltransferase (163 aa).

5-phospho-alpha-D-ribose 1-diphosphate is bound by residues 43–44 and 95–103; these read RG and DDLADTGGT. Asp-96 is a Mg(2+) binding site. Residues Asp-99 and Ile-142 each coordinate guanine. Positions 99 and 142 each coordinate xanthine. GMP contacts are provided by residues 99 to 103 and 141 to 142; these read DTGGT and WI.

Belongs to the purine/pyrimidine phosphoribosyltransferase family. XGPT subfamily. As to quaternary structure, homotetramer. The cofactor is Mg(2+).

The protein resides in the cell inner membrane. It catalyses the reaction GMP + diphosphate = guanine + 5-phospho-alpha-D-ribose 1-diphosphate. It carries out the reaction XMP + diphosphate = xanthine + 5-phospho-alpha-D-ribose 1-diphosphate. The catalysed reaction is IMP + diphosphate = hypoxanthine + 5-phospho-alpha-D-ribose 1-diphosphate. The protein operates within purine metabolism; GMP biosynthesis via salvage pathway; GMP from guanine: step 1/1. Its pathway is purine metabolism; XMP biosynthesis via salvage pathway; XMP from xanthine: step 1/1. Its function is as follows. Purine salvage pathway enzyme that catalyzes the transfer of the ribosyl-5-phosphate group from 5-phospho-alpha-D-ribose 1-diphosphate (PRPP) to the N9 position of the 6-oxopurines guanine and xanthine to form the corresponding ribonucleotides GMP (guanosine 5'-monophosphate) and XMP (xanthosine 5'-monophosphate), with the release of PPi. To a lesser extent, also acts on hypoxanthine. This chain is Xanthine-guanine phosphoribosyltransferase, found in Nitratidesulfovibrio vulgaris (strain ATCC 29579 / DSM 644 / CCUG 34227 / NCIMB 8303 / VKM B-1760 / Hildenborough) (Desulfovibrio vulgaris).